A 353-amino-acid chain; its full sequence is Photosystem II D2 protein (353 aa).

T2 is subject to N-acetylthreonine. T2 carries the post-translational modification Phosphothreonine. A helical membrane pass occupies residues 41–61 (CAYFAIGGWFTGTTFVTSWYT). H118 serves as a coordination point for chlorophyll a. The helical transmembrane segment at 125-141 (GFMLRQFELARSVQLRP) threads the bilayer. Pheophytin a is bound by residues Q130 and N143. The chain crosses the membrane as a helical span at residues 153–166 (VFVSVFLIYPLGQS). H198 is a chlorophyll a binding site. Residues 208–228 (AALLCAIHGATVENTLFEDGD) form a helical membrane-spanning segment. H215 and F262 together coordinate a plastoquinone. Residue H215 participates in Fe cation binding. H269 is a Fe cation binding site. The chain crosses the membrane as a helical span at residues 279-295 (GLWMSALGVVGLALNLR).

Belongs to the reaction center PufL/M/PsbA/D family. PSII is composed of 1 copy each of membrane proteins PsbA, PsbB, PsbC, PsbD, PsbE, PsbF, PsbH, PsbI, PsbJ, PsbK, PsbL, PsbM, PsbT, PsbX, PsbY, PsbZ, Psb30/Ycf12, at least 3 peripheral proteins of the oxygen-evolving complex and a large number of cofactors. It forms dimeric complexes. It depends on The D1/D2 heterodimer binds P680, chlorophylls that are the primary electron donor of PSII, and subsequent electron acceptors. It shares a non-heme iron and each subunit binds pheophytin, quinone, additional chlorophylls, carotenoids and lipids. There is also a Cl(-1) ion associated with D1 and D2, which is required for oxygen evolution. The PSII complex binds additional chlorophylls, carotenoids and specific lipids. as a cofactor.

It is found in the plastid. It localises to the chloroplast thylakoid membrane. The catalysed reaction is 2 a plastoquinone + 4 hnu + 2 H2O = 2 a plastoquinol + O2. Photosystem II (PSII) is a light-driven water:plastoquinone oxidoreductase that uses light energy to abstract electrons from H(2)O, generating O(2) and a proton gradient subsequently used for ATP formation. It consists of a core antenna complex that captures photons, and an electron transfer chain that converts photonic excitation into a charge separation. The D1/D2 (PsbA/PsbD) reaction center heterodimer binds P680, the primary electron donor of PSII as well as several subsequent electron acceptors. D2 is needed for assembly of a stable PSII complex. The chain is Photosystem II D2 protein from Carica papaya (Papaya).